Here is a 306-residue protein sequence, read N- to C-terminus: Dermonecrotic toxin LiSicTox-alphaIA2ai (306 aa).

An N-terminal signal peptide occupies residues 1–18; that stretch reads MLPYIALILVCWSVLSQA. A propeptide spanning residues 19–26 is cleaved from the precursor; sequence AQTDVEGR. Histidine 38 is a catalytic residue. Residues glutamate 58 and aspartate 60 each coordinate Mg(2+). The active-site Nucleophile is the histidine 74. 2 disulfides stabilise this stretch: cysteine 78–cysteine 84 and cysteine 80–cysteine 223. Aspartate 118 is a Mg(2+) binding site. A glycan (N-linked (GlcNAc...) asparagine) is linked at asparagine 283.

The protein belongs to the arthropod phospholipase D family. Class II subfamily. Class IIa sub-subfamily. It depends on Mg(2+) as a cofactor. In terms of tissue distribution, expressed by the venom gland.

It is found in the secreted. The enzyme catalyses an N-(acyl)-sphingosylphosphocholine = an N-(acyl)-sphingosyl-1,3-cyclic phosphate + choline. The catalysed reaction is an N-(acyl)-sphingosylphosphoethanolamine = an N-(acyl)-sphingosyl-1,3-cyclic phosphate + ethanolamine. It catalyses the reaction a 1-acyl-sn-glycero-3-phosphocholine = a 1-acyl-sn-glycero-2,3-cyclic phosphate + choline. It carries out the reaction a 1-acyl-sn-glycero-3-phosphoethanolamine = a 1-acyl-sn-glycero-2,3-cyclic phosphate + ethanolamine. Dermonecrotic toxins cleave the phosphodiester linkage between the phosphate and headgroup of certain phospholipids (sphingolipid and lysolipid substrates), forming an alcohol (often choline) and a cyclic phosphate. This toxin acts on sphingomyelin (SM). It may also act on ceramide phosphoethanolamine (CPE), lysophosphatidylcholine (LPC) and lysophosphatidylethanolamine (LPE), but not on lysophosphatidylserine (LPS), and lysophosphatidylglycerol (LPG). It acts by transphosphatidylation, releasing exclusively cyclic phosphate products as second products. It induces complement-dependent hemolysis, dermonecrosis, vascular permeability and platelet aggregation. This is Dermonecrotic toxin LiSicTox-alphaIA2ai from Loxosceles intermedia (Brown spider).